Consider the following 474-residue polypeptide: MTKKLHIKTWGCQMNEYDSSKMADLLASTHGYQLTTIPEEADLLLLNTCSIREKAQEKVFSLLGQWKLLKEKNPQLIIGVGGCVASQEGEQLRQRAPCVDVIFGPQTLHRLPEMINHVQETNSPVVDISFPEIEKFDRLPEPRAEGPTAFVSIMEGCNKYCTFCVVPYTRGEEVSRPSDDILFEIAQLAAQGVREVNLLGQNVNAYRGATYDGDICSFAELLRLVAAIDGIDRIRFTTSHPIEFTDDIIDVYRDTPELVSFLHLPVQSGSDRILTMMKRAHTALEYKAIIRKLRQARPDIQISSDFIVGFPGETQQDFEQTMKLVADIHFDTSYSFIYSPRPGTPAADLPDNVSEEEKKQRLHILQQRISQQAMEISRKMVGTVQRVLVEGTSRKNVMELAGRTENNRVVNFEGSPDMIGKFVDVEIVNVYASSLRGILLRTEDQMDLRTHESPQSVIARTRKENEIGVGIYQP.

An MTTase N-terminal domain is found at Lys3–Glu120. Positions 12, 49, 83, 157, 161, and 164 each coordinate [4Fe-4S] cluster. In terms of domain architecture, Radical SAM core spans Arg143–Glu375. The TRAM domain occupies Arg378–Arg441.

Belongs to the methylthiotransferase family. MiaB subfamily. Monomer. [4Fe-4S] cluster serves as cofactor.

Its subcellular location is the cytoplasm. It catalyses the reaction N(6)-dimethylallyladenosine(37) in tRNA + (sulfur carrier)-SH + AH2 + 2 S-adenosyl-L-methionine = 2-methylsulfanyl-N(6)-dimethylallyladenosine(37) in tRNA + (sulfur carrier)-H + 5'-deoxyadenosine + L-methionine + A + S-adenosyl-L-homocysteine + 2 H(+). Functionally, catalyzes the methylthiolation of N6-(dimethylallyl)adenosine (i(6)A), leading to the formation of 2-methylthio-N6-(dimethylallyl)adenosine (ms(2)i(6)A) at position 37 in tRNAs that read codons beginning with uridine. This Yersinia pseudotuberculosis serotype O:3 (strain YPIII) protein is tRNA-2-methylthio-N(6)-dimethylallyladenosine synthase.